The primary structure comprises 439 residues: Glycosyl hydrolase DigH (439 aa).

The signal sequence occupies residues 1-27 (MDICSRNKKLTIRRPAILVALALLLCS). A lipid anchor (N-palmitoyl cysteine) is attached at Cys-28. A lipid anchor (S-diacylglycerol cysteine) is attached at Cys-28. Positions 34 to 54 (ESMVTPPAGSKPPATTQQSSQ) are disordered.

This sequence belongs to the glycosyl hydrolase-like 10 (GHL10) family.

Its subcellular location is the cell outer membrane. Functionally, divisome-localized glycosyl hydrolase that cleaves peptide-free (denuded) peptidoglycans. This Escherichia coli O157:H7 protein is Glycosyl hydrolase DigH.